A 230-amino-acid chain; its full sequence is Cytochrome c oxidase subunit 2 (230 aa).

The Mitochondrial intermembrane segment spans residues 1–14 (MAYPLQLGFQDATS). The chain crosses the membrane as a helical span at residues 15–45 (PIMEELLHFHDHTLMIVFLISSLVLYIISTM). Topologically, residues 46 to 59 (LTTKLTHTNTMDAQ) are mitochondrial matrix. A helical transmembrane segment spans residues 60–87 (EVETIWTILPAIILILIALPSLRILYMM). Residues 88–230 (DEINNPNLTI…NWTSSMMSTS (143 aa)) lie on the Mitochondrial intermembrane side of the membrane. Residues His161, Cys196, Glu198, Cys200, His204, and Met207 each coordinate Cu cation. Glu198 lines the Mg(2+) pocket. The residue at position 218 (Tyr218) is a Phosphotyrosine.

Belongs to the cytochrome c oxidase subunit 2 family. Component of the cytochrome c oxidase (complex IV, CIV), a multisubunit enzyme composed of 14 subunits. The complex is composed of a catalytic core of 3 subunits MT-CO1, MT-CO2 and MT-CO3, encoded in the mitochondrial DNA, and 11 supernumerary subunits COX4I, COX5A, COX5B, COX6A, COX6B, COX6C, COX7A, COX7B, COX7C, COX8 and NDUFA4, which are encoded in the nuclear genome. The complex exists as a monomer or a dimer and forms supercomplexes (SCs) in the inner mitochondrial membrane with NADH-ubiquinone oxidoreductase (complex I, CI) and ubiquinol-cytochrome c oxidoreductase (cytochrome b-c1 complex, complex III, CIII), resulting in different assemblies (supercomplex SCI(1)III(2)IV(1) and megacomplex MCI(2)III(2)IV(2)). Found in a complex with TMEM177, COA6, COX18, COX20, SCO1 and SCO2. Interacts with TMEM177 in a COX20-dependent manner. Interacts with COX20. Interacts with COX16. Cu cation serves as cofactor.

The protein resides in the mitochondrion inner membrane. The enzyme catalyses 4 Fe(II)-[cytochrome c] + O2 + 8 H(+)(in) = 4 Fe(III)-[cytochrome c] + 2 H2O + 4 H(+)(out). Its function is as follows. Component of the cytochrome c oxidase, the last enzyme in the mitochondrial electron transport chain which drives oxidative phosphorylation. The respiratory chain contains 3 multisubunit complexes succinate dehydrogenase (complex II, CII), ubiquinol-cytochrome c oxidoreductase (cytochrome b-c1 complex, complex III, CIII) and cytochrome c oxidase (complex IV, CIV), that cooperate to transfer electrons derived from NADH and succinate to molecular oxygen, creating an electrochemical gradient over the inner membrane that drives transmembrane transport and the ATP synthase. Cytochrome c oxidase is the component of the respiratory chain that catalyzes the reduction of oxygen to water. Electrons originating from reduced cytochrome c in the intermembrane space (IMS) are transferred via the dinuclear copper A center (CU(A)) of subunit 2 and heme A of subunit 1 to the active site in subunit 1, a binuclear center (BNC) formed by heme A3 and copper B (CU(B)). The BNC reduces molecular oxygen to 2 water molecules using 4 electrons from cytochrome c in the IMS and 4 protons from the mitochondrial matrix. The polypeptide is Cytochrome c oxidase subunit 2 (MT-CO2) (Ornithorhynchus anatinus (Duckbill platypus)).